Reading from the N-terminus, the 377-residue chain is 4-hydroxy-3-methylbut-2-en-1-yl diphosphate synthase (flavodoxin) (377 aa).

Cys-272, Cys-275, Cys-307, and Glu-314 together coordinate [4Fe-4S] cluster.

Belongs to the IspG family. The cofactor is [4Fe-4S] cluster.

The catalysed reaction is (2E)-4-hydroxy-3-methylbut-2-enyl diphosphate + oxidized [flavodoxin] + H2O + 2 H(+) = 2-C-methyl-D-erythritol 2,4-cyclic diphosphate + reduced [flavodoxin]. It functions in the pathway isoprenoid biosynthesis; isopentenyl diphosphate biosynthesis via DXP pathway; isopentenyl diphosphate from 1-deoxy-D-xylulose 5-phosphate: step 5/6. Its function is as follows. Converts 2C-methyl-D-erythritol 2,4-cyclodiphosphate (ME-2,4cPP) into 1-hydroxy-2-methyl-2-(E)-butenyl 4-diphosphate. This is 4-hydroxy-3-methylbut-2-en-1-yl diphosphate synthase (flavodoxin) from Zymomonas mobilis subsp. mobilis (strain ATCC 31821 / ZM4 / CP4).